We begin with the raw amino-acid sequence, 431 residues long: Beclin-2 (431 aa).

Positions 17–74 (LSGSSESRSLPAAPAPTSGQAEPGDTREPGVTTREVTDAEEQQDGASSRSPPGDGSVS) are disordered. Residues 125–248 (LLEQLDIQLA…ARVQRDRLKE (124 aa)) adopt a coiled-coil conformation. Positions 173-243 (EARLVQELED…NQLQYARVQR (71 aa)) are required for homodimer formation.

This sequence belongs to the beclin family. Homodimer (via coiled-coil domain). Interacts (via coiled-coil domain) with ATG14 (via coiled-coil domain); this interaction is tighter than BECN2 self-association. Interacts with AMBRA1, UVRAG and PIK3C3/VPS34; these interactions are not disrupted by starvation. Does not interact with RUBCN. Interacts (via N-terminus) with GPRASP1/GASP1; the interaction is direct. In terms of tissue distribution, present in fetal and adult brain (at protein level).

It localises to the cytoplasm. Functionally, involved in 2 distinct lysosomal degradation pathways: acts as a regulator of autophagy and as a regulator of G-protein coupled receptors turnover. Regulates degradation in lysosomes of a variety of G-protein coupled receptors via its interaction with GPRASP1/GASP1. The protein is Beclin-2 of Homo sapiens (Human).